A 969-amino-acid polypeptide reads, in one-letter code: MTFALGQRWISDTESDLGLGTVVAMDARTVTVMFAASEENRVYARTDAPVTRVAFNVGDVIECQEGWSLSVEEVIEDKGLLTYLGTREDTQETEVTLREIFLSNQIRFNKPQDKLYAGQIDRMDNFVLRYRALSNQYQQHKSPMRGLCGMRAGLIPHQLYIAHEVGRRHAPRVLLADEVGLGKTIEAGMIIHQQVLSGRAERILIVVPETLQHQWLVEMMRRFNLHFSIFDEERCIESFAESDNPFDTQQYVLCSLDFLRKSRKRYEQALEGEWDLLVVDEAHHLEWSQDKPSREYQVVEGLAENTSGVLLLTATPEQLGRESHFARLRLLDPDRFYDYEAFVEEEDQYAPVADAVTALFSGVKLENSAKNQITELLSEQDVEPLFRVIEGDSSEEEQALARQELIDNLMDRHGTGRVLFRNTRAAIKGFPKRNVNLLPMDIPTQYTTSMRVSGMIGGKMAPEARAMKMLYPEEIFQEFEGEDSSWWQFDSRVNWLIEKIQDKRSEKILVIASRASTALQLEQALREREGVRATVFHEGMSILERDKAAAYFAQEEGGAQVLICSEIGSEGRNFQFANQLVMFDLPFNPDLLEQRIGRLDRIGQLRDIDIHVPYLKGTSQAILARWFDEGLNAFAETCPTGRTVYDKYSDVLIEMLASGNTEQLDEVIEESAKLNQSLKSDLEKGRDRLLEMHSNGGDKAHEIAEKIASTDGDTNLVTFALSLFDTIGLNQDDKGENALVVTPSEHMMVPSYPGLPYEGATITFDRETALSREDMNFISWEHPMIQGGIDLLLSEGVGASAVSLLKNKALPVGTILLELVYLVDAQAPKRSGISQFLPKTPIRLMMDGRGNDLSAQVEFDSFNRQLSPVNRHLASKLVNSVQGEIHKLIEAGETHVLPKVEEVRQQAQKDMQTNLNGELERLQALKAVNPNIRDEELEVIEAQINELTGYISKAQVQLDSLRLIVVSHN.

Residues 164 to 334 enclose the Helicase ATP-binding domain; that stretch reads EVGRRHAPRV…FARLRLLDPD (171 aa). 177–184 contributes to the ATP binding site; sequence DEVGLGKT. Residues 280–283 carry the DEAH box motif; sequence DEAH. The Helicase C-terminal domain maps to 492–679; sequence RVNWLIEKIQ…ESAKLNQSLK (188 aa).

It belongs to the SNF2/RAD54 helicase family. RapA subfamily. As to quaternary structure, interacts with the RNAP. Has a higher affinity for the core RNAP than for the holoenzyme. Its ATPase activity is stimulated by binding to RNAP.

Transcription regulator that activates transcription by stimulating RNA polymerase (RNAP) recycling in case of stress conditions such as supercoiled DNA or high salt concentrations. Probably acts by releasing the RNAP, when it is trapped or immobilized on tightly supercoiled DNA. Does not activate transcription on linear DNA. Probably not involved in DNA repair. This Vibrio atlanticus (strain LGP32) (Vibrio splendidus (strain Mel32)) protein is RNA polymerase-associated protein RapA.